The following is a 423-amino-acid chain: MLTSRPRGTEDILPEEVGRWYLLENTAREVSRLYGYREIRTPIFEHTELFNRGVGDTSDIVEKEMYTFIDRGDRSLTLRPEGTAPVVRAFVEHSLEARGLPVKLFYLGPMFRYGRPQAGRLRQFHQFGVEAFGSRDPALDAEVIALAMDFYTRLGLKDLELHLNSVGCPACRPAHREKLKAYLRPRLEELCPTCQGRFERNPLRIFDCKSPACQEIVREAPTVTASLCPDCAGHFHRVQEYLKALGIEFILDEHLVRGLDYYTKTAFEIMVKGIGAQSSIGGGGRYDGLVAALGGKQVPGIGFGLGLERVLLALEIQGQEPPPEGGVDVLVVTAGTGVDLAAFRLLAGLRAAGIRADKDYLERSLKGQMKYANRYPARMAVILGEEELARGRVSVRRLDAGSQEEVPLAAVVDYCRKMKESGW.

The protein belongs to the class-II aminoacyl-tRNA synthetase family. Homodimer.

The protein localises to the cytoplasm. It carries out the reaction tRNA(His) + L-histidine + ATP = L-histidyl-tRNA(His) + AMP + diphosphate + H(+). This Moorella thermoacetica (strain ATCC 39073 / JCM 9320) protein is Histidine--tRNA ligase.